A 504-amino-acid polypeptide reads, in one-letter code: Dimethylsulfoniopropionate lyase 5 (504 aa).

It belongs to the aspartate/glutamate racemases family. ALMA1 subfamily. Homotetramer.

It carries out the reaction S,S-dimethyl-beta-propiothetin = acrylate + dimethyl sulfide + H(+). Its function is as follows. Mediates cleavage of dimethylsulfoniopropionate (DMSP) into dimethyl sulfide (DMS) and acrylate. DMS is the principal form by which sulfur is transported from oceans to the atmosphere and is a key component of the ocean sulfur cycle. The polypeptide is Dimethylsulfoniopropionate lyase 5 (Emiliania huxleyi (strain CCMP1516)).